Reading from the N-terminus, the 103-residue chain is Small ribosomal subunit protein uS10 (103 aa).

Belongs to the universal ribosomal protein uS10 family. Part of the 30S ribosomal subunit.

Involved in the binding of tRNA to the ribosomes. This Saccharophagus degradans (strain 2-40 / ATCC 43961 / DSM 17024) protein is Small ribosomal subunit protein uS10.